A 103-amino-acid polypeptide reads, in one-letter code: UPF0145 protein pXO2-45/BXB0052/GBAA_pXO2_0052 (103 aa).

The protein belongs to the UPF0145 family.

The polypeptide is UPF0145 protein pXO2-45/BXB0052/GBAA_pXO2_0052 (Bacillus anthracis).